A 183-amino-acid polypeptide reads, in one-letter code: Capsid protein (183 aa).

Positions 136–183 (NAPILSTLPETTVVRRRGRSPRRRTPSPRRRRSQSPRRRRSQSRESQC) are disordered. Basic residues predominate over residues 149 to 176 (VRRRGRSPRRRTPSPRRRRSQSPRRRRS). Residues S155, S162, and S170 each carry the phosphoserine; by host modification. The stretch at 155 to 161 (SPRRRTP) is one 1; half-length repeat. A 3 X 8 AA repeats of S-P-R-R-R-[PR]-S-Q region spans residues 155–177 (SPRRRTPSPRRRRSQSPRRRRSQ). Positions 158–175 (RRTPSPRRRRSQSPRRRR) match the Bipartite nuclear localization signal motif. 2 tandem repeats follow at residues 162–169 (SPRRRRSQ) and 170–177 (SPRRRRSQ). The interval 177-183 (QSRESQC) is RNA binding.

It belongs to the orthohepadnavirus core antigen family. In terms of assembly, homodimerizes, then multimerizes. Interacts with cytosol exposed regions of viral L glycoprotein present in the reticulum-to-Golgi compartment. Interacts with human FLNB. Phosphorylated form interacts with host importin alpha; this interaction depends on the exposure of the NLS, which itself depends upon genome maturation and/or phosphorylation of the capsid protein. Interacts with host NUP153. Post-translationally, phosphorylated by host SRPK1, SRPK2, and maybe protein kinase C or GAPDH. Phosphorylation is critical for pregenomic RNA packaging. Protein kinase C phosphorylation is stimulated by HBx protein and may play a role in transport of the viral genome to the nucleus at the late step during the viral replication cycle.

The protein localises to the virion. Its subcellular location is the host cytoplasm. Functionally, self assembles to form an icosahedral capsid. Most capsids appear to be large particles with an icosahedral symmetry of T=4 and consist of 240 copies of capsid protein, though a fraction forms smaller T=3 particles consisting of 180 capsid proteins. Entering capsids are transported along microtubules to the nucleus. Phosphorylation of the capsid is thought to induce exposure of nuclear localization signal in the C-terminal portion of the capsid protein that allows binding to the nuclear pore complex via the importin (karyopherin-) alpha and beta. Capsids are imported in intact form through the nuclear pore into the nuclear basket, where it probably binds NUP153. Only capsids that contain the mature viral genome can release the viral DNA and capsid protein into the nucleoplasm. Immature capsids get stuck in the basket. Capsids encapsulate the pre-genomic RNA and the P protein. Pre-genomic RNA is reverse-transcribed into DNA while the capsid is still in the cytoplasm. The capsid can then either be directed to the nucleus, providing more genomes for transcription, or bud through the endoplasmic reticulum to provide new virions. This Hepatitis B virus genotype B1 subtype adw (isolate Japan/pJDW233/1988) (HBV-B) protein is Capsid protein.